Consider the following 303-residue polypeptide: Putative F-box protein At5g62060 (303 aa).

Residues 27–74 (KSRYIDIPLDITVEILKKLPAKSLVRFQCVSKQWSTIIGSRRDFIDSI) enclose the F-box domain.

The polypeptide is Putative F-box protein At5g62060 (Arabidopsis thaliana (Mouse-ear cress)).